The sequence spans 203 residues: Ras-related protein RABG3b (203 aa).

15–22 provides a ligand contact to GTP; it reads GDSGVGKT. The Effector region motif lies at 37 to 45; sequence YKATIGADF. GTP contacts are provided by residues 63-67, 125-128, and 158-159; these read DTAGQ, NKVD, and SA. Residues cysteine 201 and cysteine 203 are each lipidated (S-geranylgeranyl cysteine). A Cysteine methyl ester modification is found at cysteine 203.

It belongs to the small GTPase superfamily. Rab family. As to quaternary structure, interacts with VPS39. Expressed in xylem cells of inflorescence stems.

The protein resides in the cell membrane. In terms of biological role, intracellular vesicle trafficking and protein transport. Functions in autophagy. Involved in xylem and tracheary element differentiation. The sequence is that of Ras-related protein RABG3b (RABG3B) from Arabidopsis thaliana (Mouse-ear cress).